The sequence spans 463 residues: Chromosomal replication initiator protein DnaA (463 aa).

Residues 1–83 (MSLTLWQQCL…LRFEVGSKPV (83 aa)) form a domain I, interacts with DnaA modulators region. The interval 83–126 (VAQAISQPVMVSAHASAPGVVSRPAPTRPSWDNVPALAELSYRS) is domain II. The domain III, AAA+ region stretch occupies residues 127 to 343 (NVNTKHNFDN…GALNRVIANA (217 aa)). ATP is bound by residues G171, G173, K174, and T175. Residues 344 to 463 (NFTGRAITID…FSNLIRTLSS (120 aa)) form a domain IV, binds dsDNA region.

This sequence belongs to the DnaA family. In terms of assembly, oligomerizes as a right-handed, spiral filament on DNA at oriC.

The protein localises to the cytoplasm. Plays an essential role in the initiation and regulation of chromosomal replication. ATP-DnaA binds to the origin of replication (oriC) to initiate formation of the DNA replication initiation complex once per cell cycle. Binds the DnaA box (a 9 base pair repeat at the origin) and separates the double-stranded (ds)DNA. Forms a right-handed helical filament on oriC DNA; dsDNA binds to the exterior of the filament while single-stranded (ss)DNA is stabiized in the filament's interior. The ATP-DnaA-oriC complex binds and stabilizes one strand of the AT-rich DNA unwinding element (DUE), permitting loading of DNA polymerase. After initiation quickly degrades to an ADP-DnaA complex that is not apt for DNA replication. Binds acidic phospholipids. In Erwinia tasmaniensis (strain DSM 17950 / CFBP 7177 / CIP 109463 / NCPPB 4357 / Et1/99), this protein is Chromosomal replication initiator protein DnaA.